The primary structure comprises 125 residues: MADLNTIVDQLSGLTVMEAADLVKKLEEKWGVSAAAPVMVAGGAGGAAAAAPVEEKTEFNVVLADAGANKINVIKEVRAITGLGLKEAKDLVEGAPKEVKVGIPKAEADELKKKLEAAGAKVEIK.

Belongs to the bacterial ribosomal protein bL12 family. In terms of assembly, homodimer. Part of the ribosomal stalk of the 50S ribosomal subunit. Forms a multimeric L10(L12)X complex, where L10 forms an elongated spine to which 2 to 4 L12 dimers bind in a sequential fashion. Binds GTP-bound translation factors.

Its function is as follows. Forms part of the ribosomal stalk which helps the ribosome interact with GTP-bound translation factors. Is thus essential for accurate translation. This Anaeromyxobacter sp. (strain Fw109-5) protein is Large ribosomal subunit protein bL12.